The sequence spans 355 residues: Holliday junction branch migration complex subunit RuvB (355 aa).

Residues 4-195 (TDKLTGADRL…FGIVARLEFY (192 aa)) form a large ATPase domain (RuvB-L) region. Residues Leu34, Arg35, Gly76, Lys79, Thr80, Thr81, 142–144 (EDY), Arg185, Tyr195, and Arg232 contribute to the ATP site. Thr80 contacts Mg(2+). A small ATPAse domain (RuvB-S) region spans residues 196–266 (TPDELARIVA…LADAALEMLD (71 aa)). The head domain (RuvB-H) stretch occupies residues 269 to 355 (SVGFDLMDRK…DGGADLAEGL (87 aa)). 3 residues coordinate DNA: Arg305, Arg324, and Arg329.

This sequence belongs to the RuvB family. Homohexamer. Forms an RuvA(8)-RuvB(12)-Holliday junction (HJ) complex. HJ DNA is sandwiched between 2 RuvA tetramers; dsDNA enters through RuvA and exits via RuvB. An RuvB hexamer assembles on each DNA strand where it exits the tetramer. Each RuvB hexamer is contacted by two RuvA subunits (via domain III) on 2 adjacent RuvB subunits; this complex drives branch migration. In the full resolvosome a probable DNA-RuvA(4)-RuvB(12)-RuvC(2) complex forms which resolves the HJ.

Its subcellular location is the cytoplasm. The enzyme catalyses ATP + H2O = ADP + phosphate + H(+). Its function is as follows. The RuvA-RuvB-RuvC complex processes Holliday junction (HJ) DNA during genetic recombination and DNA repair, while the RuvA-RuvB complex plays an important role in the rescue of blocked DNA replication forks via replication fork reversal (RFR). RuvA specifically binds to HJ cruciform DNA, conferring on it an open structure. The RuvB hexamer acts as an ATP-dependent pump, pulling dsDNA into and through the RuvAB complex. RuvB forms 2 homohexamers on either side of HJ DNA bound by 1 or 2 RuvA tetramers; 4 subunits per hexamer contact DNA at a time. Coordinated motions by a converter formed by DNA-disengaged RuvB subunits stimulates ATP hydrolysis and nucleotide exchange. Immobilization of the converter enables RuvB to convert the ATP-contained energy into a lever motion, pulling 2 nucleotides of DNA out of the RuvA tetramer per ATP hydrolyzed, thus driving DNA branch migration. The RuvB motors rotate together with the DNA substrate, which together with the progressing nucleotide cycle form the mechanistic basis for DNA recombination by continuous HJ branch migration. Branch migration allows RuvC to scan DNA until it finds its consensus sequence, where it cleaves and resolves cruciform DNA. This Cupriavidus metallidurans (strain ATCC 43123 / DSM 2839 / NBRC 102507 / CH34) (Ralstonia metallidurans) protein is Holliday junction branch migration complex subunit RuvB.